We begin with the raw amino-acid sequence, 249 residues long: tRNA pseudouridine synthase A (249 aa).

Residue D53 is the Nucleophile of the active site. Position 111 (Y111) interacts with substrate.

This sequence belongs to the tRNA pseudouridine synthase TruA family. In terms of assembly, homodimer.

It catalyses the reaction uridine(38/39/40) in tRNA = pseudouridine(38/39/40) in tRNA. Formation of pseudouridine at positions 38, 39 and 40 in the anticodon stem and loop of transfer RNAs. This Streptococcus pneumoniae serotype 2 (strain D39 / NCTC 7466) protein is tRNA pseudouridine synthase A.